We begin with the raw amino-acid sequence, 256 residues long: Protein CUSTOS (256 aa).

Low complexity predominate over residues 1 to 19 (MVAPSGAMSDSENSSSSSS). Disordered regions lie at residues 1–83 (MVAP…TPEF), 127–163 (FTSIPGGHKKEASPRPCRKRQPPSSSEDSDEELQRCR), and 227–256 (IQKKRKKKAKKSREAPLCPPAECAAAKPEN). Ser62 carries the post-translational modification Phosphoserine. Residues 63 to 83 (RRHEVNQHEEDGNDLRTTPEF) show a composition bias toward basic and acidic residues. The residue at position 80 (Thr80) is a Phosphothreonine. Ser139 is modified (phosphoserine). The short motif at 228-235 (QKKRKKKA) is the Nucleolar localization signal (NLS) element. A compositionally biased stretch (basic residues) spans 228 to 237 (QKKRKKKAKK). Over residues 246-256 (PAECAAAKPEN) the composition is skewed to low complexity.

It belongs to the CUSTOS family.

It localises to the nucleus envelope. Functionally, plays a role in the regulation of Wnt signaling pathway during early development. The sequence is that of Protein CUSTOS from Mus musculus (Mouse).